Here is a 179-residue protein sequence, read N- to C-terminus: Large ribosomal subunit protein uL6 (179 aa).

The protein belongs to the universal ribosomal protein uL6 family. Part of the 50S ribosomal subunit.

This protein binds to the 23S rRNA, and is important in its secondary structure. It is located near the subunit interface in the base of the L7/L12 stalk, and near the tRNA binding site of the peptidyltransferase center. In Chlorobium phaeobacteroides (strain BS1), this protein is Large ribosomal subunit protein uL6.